The following is a 151-amino-acid chain: MNNEILQRMVENLSEEKFGRTFQHRAYFNKRLRTTGGRYLLKSHDIEINPKQYEHYGEDAVVKIILHELCHYHLHIAGKGYQHKDQDFKRLSQQVGAPRFCNSIESYQQRANYEYYCTKCHAKYIRIRKVDTNRMRCGHCNGKLRMKRQLK.

Positions 6-147 (LQRMVENLSE…GHCNGKLRMK (142 aa)) constitute a SprT-like domain. His67 contacts Zn(2+). Glu68 is an active-site residue. His71 lines the Zn(2+) pocket.

The protein belongs to the SprT family. Requires Zn(2+) as cofactor.

The protein localises to the cytoplasm. The polypeptide is Protein SprT-like (Staphylococcus aureus (strain MRSA252)).